A 315-amino-acid polypeptide reads, in one-letter code: Ribosomal RNA small subunit methyltransferase H (315 aa).

S-adenosyl-L-methionine-binding positions include 37–39 (GGH), Asp-57, Phe-83, Asp-105, and Gln-112.

Belongs to the methyltransferase superfamily. RsmH family.

It localises to the cytoplasm. The catalysed reaction is cytidine(1402) in 16S rRNA + S-adenosyl-L-methionine = N(4)-methylcytidine(1402) in 16S rRNA + S-adenosyl-L-homocysteine + H(+). Its function is as follows. Specifically methylates the N4 position of cytidine in position 1402 (C1402) of 16S rRNA. The protein is Ribosomal RNA small subunit methyltransferase H of Pseudomonas putida (strain GB-1).